Reading from the N-terminus, the 303-residue chain is Pycsar effector protein XpPycTIR (303 aa).

14–138 serves as a coordination point for a nucleoside 3',5'-cyclic phosphate; the sequence is LVATLTEHRL…RRIAATLARR (125 aa). A TIR-like region spans residues 154-273; that stretch reads RVFIMSSVEA…DLAGLTTIPY (120 aa).

It is found in the cytoplasm. The catalysed reaction is NAD(+) + H2O = ADP-D-ribose + nicotinamide + H(+). Functionally, pycsar (pyrimidine cyclase system for antiphage resistance) provides immunity against bacteriophage. The pyrimidine cyclase (PycC) synthesizes cyclic nucleotides in response to infection; these serve as specific second messenger signals. The signals activate the adjacent effector, leading to bacterial cell death and abortive phage infection. A clade B Pycsar system. The effector gene of a two-gene Pycsar system. Expression of this and adjacent uridylate cyclase XpPycC (AC P0DV28) confers resistance to bacteriophage T7. When cells expressing the Pycsar system are infected by phage T7 at low multiplicity of infection (0.2 MOI) the culture survivey, at 2.0 MOI bacteria enter growth arrest. The same cells enter growth arrest after exposure to 2.5 mM cUMP but not cCMP; the effector protein responds only to the cUMP usually produced by its cognate NTP cyclase. NAD(+) levels in infected cells are depleted between 5 and 10 minutes after infection with T7 at MOI of 2. Probably only responds to cUMP. This chain is Pycsar effector protein XpPycTIR, found in Xanthomonas perforans.